Here is a 107-residue protein sequence, read N- to C-terminus: Diuretic hormone 45 (107 aa).

A propeptide spanning residues 1–44 (LYAMSPMAARYSAGAPWLYLLADMPRDSQRLVDPADLHEGRARP) is cleaved from the precursor. Valine 91 carries the valine amide modification.

Expressed in corpora cardiaca (CC), corpora allata (CA), antennal lobe (AL) and gnathal ganglion (GNG) (at protein level). Expression in AL and GNG detected in some animals, in CC and CA in few animals (at protein level).

The protein localises to the secreted. Regulation of fluid secretion. This chain is Diuretic hormone 45, found in Agrotis ipsilon (Black cutworm moth).